Reading from the N-terminus, the 841-residue chain is Protein translocase subunit SecA (841 aa).

ATP is bound by residues glutamine 86, 104 to 108 (GEGKT), and aspartate 493. Residues 788-822 (EEVAEGKAVRPSANGQEDKKAKRKPVRKAENIGRN) are disordered. 4 residues coordinate Zn(2+): cysteine 825, cysteine 827, cysteine 836, and cysteine 837.

This sequence belongs to the SecA family. As to quaternary structure, monomer and homodimer. Part of the essential Sec protein translocation apparatus which comprises SecA, SecYEG and auxiliary proteins SecDF. Other proteins may also be involved. Zn(2+) serves as cofactor.

It localises to the cell membrane. The protein localises to the cytoplasm. It catalyses the reaction ATP + H2O + cellular proteinSide 1 = ADP + phosphate + cellular proteinSide 2.. In terms of biological role, part of the Sec protein translocase complex. Interacts with the SecYEG preprotein conducting channel. Has a central role in coupling the hydrolysis of ATP to the transfer of proteins into and across the cell membrane, serving as an ATP-driven molecular motor driving the stepwise translocation of polypeptide chains across the membrane. The polypeptide is Protein translocase subunit SecA (Shouchella clausii (strain KSM-K16) (Alkalihalobacillus clausii)).